Reading from the N-terminus, the 185-residue chain is Large ribosomal subunit protein bL25 (185 aa).

The protein belongs to the bacterial ribosomal protein bL25 family. CTC subfamily. In terms of assembly, part of the 50S ribosomal subunit; part of the 5S rRNA/L5/L18/L25 subcomplex. Contacts the 5S rRNA. Binds to the 5S rRNA independently of L5 and L18.

This is one of the proteins that binds to the 5S RNA in the ribosome where it forms part of the central protuberance. This is Large ribosomal subunit protein bL25 from Chlamydia pneumoniae (Chlamydophila pneumoniae).